Reading from the N-terminus, the 200-residue chain is Large ribosomal subunit protein uL4 (200 aa).

A disordered region spans residues 43 to 67 (RAQKTRAEVSGSGKKPWRQKGTGRA).

This sequence belongs to the universal ribosomal protein uL4 family. In terms of assembly, part of the 50S ribosomal subunit.

Functionally, one of the primary rRNA binding proteins, this protein initially binds near the 5'-end of the 23S rRNA. It is important during the early stages of 50S assembly. It makes multiple contacts with different domains of the 23S rRNA in the assembled 50S subunit and ribosome. Its function is as follows. Forms part of the polypeptide exit tunnel. This is Large ribosomal subunit protein uL4 from Haemophilus influenzae (strain PittEE).